Consider the following 187-residue polypeptide: Acireductone dioxygenase (187 aa).

Residues His-87, His-89, Glu-93, and His-136 each coordinate Fe(2+). 4 residues coordinate Ni(2+): His-87, His-89, Glu-93, and His-136.

The protein belongs to the acireductone dioxygenase (ARD) family. The cofactor is Fe(2+). Ni(2+) serves as cofactor.

The protein localises to the cytoplasm. It is found in the nucleus. It carries out the reaction 1,2-dihydroxy-5-(methylsulfanyl)pent-1-en-3-one + O2 = 4-methylsulfanyl-2-oxobutanoate + formate + 2 H(+). The enzyme catalyses 1,2-dihydroxy-5-(methylsulfanyl)pent-1-en-3-one + O2 = 3-(methylsulfanyl)propanoate + CO + formate + 2 H(+). Its pathway is amino-acid biosynthesis; L-methionine biosynthesis via salvage pathway; L-methionine from S-methyl-5-thio-alpha-D-ribose 1-phosphate: step 5/6. Catalyzes 2 different reactions between oxygen and the acireductone 1,2-dihydroxy-3-keto-5-methylthiopentene (DHK-MTPene) depending upon the metal bound in the active site. Fe-containing acireductone dioxygenase (Fe-ARD) produces formate and 2-keto-4-methylthiobutyrate (KMTB), the alpha-ketoacid precursor of methionine in the methionine recycle pathway. Ni-containing acireductone dioxygenase (Ni-ARD) produces methylthiopropionate, carbon monoxide and formate, and does not lie on the methionine recycle pathway. In Cryptococcus neoformans var. neoformans serotype D (strain JEC21 / ATCC MYA-565) (Filobasidiella neoformans), this protein is Acireductone dioxygenase.